Consider the following 424-residue polypeptide: Tyrosine--tRNA ligase (424 aa).

Residue Tyr37 participates in L-tyrosine binding. The 'HIGH' region signature appears at Pro42–His51. Lys144 carries the post-translational modification N6-acetyllysine. Tyr175 and Gln179 together coordinate L-tyrosine. Positions Lys235–Thr239 match the 'KMSKS' region motif. Lys238 is an ATP binding site. The region spanning Ala357–Gly414 is the S4 RNA-binding domain.

This sequence belongs to the class-I aminoacyl-tRNA synthetase family. TyrS type 1 subfamily. As to quaternary structure, homodimer.

It localises to the cytoplasm. It catalyses the reaction tRNA(Tyr) + L-tyrosine + ATP = L-tyrosyl-tRNA(Tyr) + AMP + diphosphate + H(+). Functionally, catalyzes the attachment of tyrosine to tRNA(Tyr) in a two-step reaction: tyrosine is first activated by ATP to form Tyr-AMP and then transferred to the acceptor end of tRNA(Tyr). This chain is Tyrosine--tRNA ligase, found in Shigella dysenteriae serotype 1 (strain Sd197).